Consider the following 568-residue polypeptide: Methionine--tRNA ligase (568 aa).

Positions 10-20 (PYVQSVPHLGN) match the 'HIGH' region motif. Residues Cys143, Cys146, Cys156, and Cys159 each coordinate Zn(2+). Residues 333-337 (KFSKS) carry the 'KMSKS' region motif. Lys336 is an ATP binding site.

This sequence belongs to the class-I aminoacyl-tRNA synthetase family. MetG type 1 subfamily. The cofactor is Zn(2+).

It localises to the cytoplasm. The catalysed reaction is tRNA(Met) + L-methionine + ATP = L-methionyl-tRNA(Met) + AMP + diphosphate. Its function is as follows. Is required not only for elongation of protein synthesis but also for the initiation of all mRNA translation through initiator tRNA(fMet) aminoacylation. The sequence is that of Methionine--tRNA ligase from Metallosphaera sedula (strain ATCC 51363 / DSM 5348 / JCM 9185 / NBRC 15509 / TH2).